The primary structure comprises 341 residues: Phenazine O-methyltransferase PhzM (341 aa).

S-adenosyl-L-methionine is bound by residues Asp205 and 231-233 (GDF). Residue His251 is the Proton acceptor of the active site.

It belongs to the class I-like SAM-binding methyltransferase superfamily. Cation-independent O-methyltransferase family. Homodimer.

The catalysed reaction is 1,6-dihydroxyphenazine + S-adenosyl-L-methionine = 1-hydroxy-6-methoxyphenazine + S-adenosyl-L-homocysteine + H(+). It catalyses the reaction 1-hydroxy-6-methoxyphenazine + S-adenosyl-L-methionine = 1,6-dimethoxyphenazine + S-adenosyl-L-homocysteine + H(+). It carries out the reaction 1-hydroxy-6-methoxyphenazine N(10)-oxide + S-adenosyl-L-methionine = 1,6-dimethoxyphenazine N(5)-oxide + S-adenosyl-L-homocysteine. The enzyme catalyses 1,6-dihydroxyphenazine N(5),N(10)-dioxide + S-adenosyl-L-methionine = 1-hydroxy-6-methoxyphenazine N(5),N(10)-dioxide + S-adenosyl-L-homocysteine. The catalysed reaction is 1-hydroxy-6-methoxyphenazine N(5),N(10)-dioxide + S-adenosyl-L-methionine = 1,6-dimethoxyphenazine N(5),N(10)-dioxide + S-adenosyl-L-homocysteine. Functionally, involved in the biosynthesis of phenazine natural products including myxin, an N(5),N(10)-dioxide phenazine antiobiotic, which has antimicrobial activity. O-methyltransferase, which converts iodinin (1,6-dihydroxyphenazine N(5),N(10)-dioxide) to myxin (1-hydroxy-6-methoxyphenazine N(5),N(10)-dioxide). Catalyzes both monomethoxy and dimethoxy formation of phenazine natural compounds. Acts on a wide variety of substrates, catalyzing O-methylation of phenazines with non-, mono- or di-N-oxide. Highest activity with 1,6-dihydroxyphenazine (DHP) as substrate. Less active with monohydroxy-containing and monohydroxy-monomethoxy-containing phenazines. Least active with non-phenazine substrates, such as 8-hydroxyquinoline and 6-hydroxyquinoline. Is not able to convert 1-hydroxyphenazine to 1-hydroxy-N5-methylphenazine (pyocyanine), hence does not function as an N-methyltransferase. This Lysobacter antibioticus protein is Phenazine O-methyltransferase PhzM.